Reading from the N-terminus, the 133-residue chain is MAEKAVTIRTRNFMTNRLLARKQFVIDVLHPGRANVSKAELKEKLARMYEVKDPNAIFCFKFRTHFGGGKSSGYGLIYDTVENAKKFEPKYRLIRNGLDTKIEKSRKQIKERKNRAKKIRGVKKTKAGDTKKK.

The interval 104-133 (KSRKQIKERKNRAKKIRGVKKTKAGDTKKK) is disordered. Positions 109-125 (IKERKNRAKKIRGVKKT) are enriched in basic residues.

The protein belongs to the eukaryotic ribosomal protein eS24 family.

In Arabidopsis thaliana (Mouse-ear cress), this protein is Small ribosomal subunit protein eS24y (RPS24B).